Here is a 178-residue protein sequence, read N- to C-terminus: MASSMISSPAVTTVNRAGAGTVAPFTGLKSMAGFPTRKTNNDIASIASNGGRVQCMQVWPTTGKKKFETLSYLPDLDDAQLAKEVEYLLRKGWIPCLEFELEHGFVYREHHRSPGYYDGRYWTMWKLPMFGCTDASQVLKELQEAKTAYPNAFIRIIGFDNVRQVQCISFIAYKPPSF.

A chloroplast-targeting transit peptide spans 1 to 54; the sequence is MASSMISSPAVTTVNRAGAGTVAPFTGLKSMAGFPTRKTNNDIASIASNGGRVQ.

This sequence belongs to the RuBisCO small chain family. As to quaternary structure, heterohexadecamer of 8 large and 8 small subunits.

The protein localises to the plastid. It is found in the chloroplast. RuBisCO catalyzes two reactions: the carboxylation of D-ribulose 1,5-bisphosphate, the primary event in carbon dioxide fixation, as well as the oxidative fragmentation of the pentose substrate. Both reactions occur simultaneously and in competition at the same active site. Although the small subunit is not catalytic it is essential for maximal activity. In Glycine tabacina, this protein is Ribulose bisphosphate carboxylase small subunit, chloroplastic.